The sequence spans 363 residues: NADH-quinone oxidoreductase subunit H (363 aa).

10 helical membrane-spanning segments follow: residues V29–W49, G62–F82, F96–F116, V127–G147, A163–A183, F202–V222, E238–L257, I264–V286, K299–F319, and F339–I359.

This sequence belongs to the complex I subunit 1 family. As to quaternary structure, NDH-1 is composed of 14 different subunits. Subunits NuoA, H, J, K, L, M, N constitute the membrane sector of the complex.

The protein localises to the cell inner membrane. It carries out the reaction a quinone + NADH + 5 H(+)(in) = a quinol + NAD(+) + 4 H(+)(out). Functionally, NDH-1 shuttles electrons from NADH, via FMN and iron-sulfur (Fe-S) centers, to quinones in the respiratory chain. The immediate electron acceptor for the enzyme in this species is believed to be ubiquinone. Couples the redox reaction to proton translocation (for every two electrons transferred, four hydrogen ions are translocated across the cytoplasmic membrane), and thus conserves the redox energy in a proton gradient. This subunit may bind ubiquinone. In Xanthomonas oryzae pv. oryzae (strain PXO99A), this protein is NADH-quinone oxidoreductase subunit H.